The following is a 111-amino-acid chain: Dormancy-associated protein 1 (111 aa).

The tract at residues 30–60 (KDDGASNQLMRSTSIPTTPTTPVTPTTPSSA) is disordered. A compositionally biased stretch (low complexity) spans 41 to 59 (STSIPTTPTTPVTPTTPSS).

The protein belongs to the DRM1/ARP family. As to expression, expressed in axilary buds and in non-growing stems and roots. Detected in sepals, stamens and carpels, but barely detected in petals or leaflets.

This Pisum sativum (Garden pea) protein is Dormancy-associated protein 1.